The chain runs to 84 residues: Cell division topological specificity factor (84 aa).

This sequence belongs to the MinE family.

Functionally, prevents the cell division inhibition by proteins MinC and MinD at internal division sites while permitting inhibition at polar sites. This ensures cell division at the proper site by restricting the formation of a division septum at the midpoint of the long axis of the cell. In Desulfotalea psychrophila (strain LSv54 / DSM 12343), this protein is Cell division topological specificity factor.